Reading from the N-terminus, the 375-residue chain is Queuine tRNA-ribosyltransferase (375 aa).

Asp-89 serves as the catalytic Proton acceptor. Residues 89-93, Asp-143, Gln-187, and Gly-214 contribute to the substrate site; that span reads DSGGF. The segment at 245 to 251 is RNA binding; sequence GVGKPED. The Nucleophile role is filled by Asp-264. An RNA binding; important for wobble base 34 recognition region spans residues 269–273; it reads TRNAR. Positions 302, 304, 307, and 333 each coordinate Zn(2+).

Belongs to the queuine tRNA-ribosyltransferase family. As to quaternary structure, homodimer. Within each dimer, one monomer is responsible for RNA recognition and catalysis, while the other monomer binds to the replacement base PreQ1. Zn(2+) serves as cofactor.

The catalysed reaction is 7-aminomethyl-7-carbaguanine + guanosine(34) in tRNA = 7-aminomethyl-7-carbaguanosine(34) in tRNA + guanine. It functions in the pathway tRNA modification; tRNA-queuosine biosynthesis. Catalyzes the base-exchange of a guanine (G) residue with the queuine precursor 7-aminomethyl-7-deazaguanine (PreQ1) at position 34 (anticodon wobble position) in tRNAs with GU(N) anticodons (tRNA-Asp, -Asn, -His and -Tyr). Catalysis occurs through a double-displacement mechanism. The nucleophile active site attacks the C1' of nucleotide 34 to detach the guanine base from the RNA, forming a covalent enzyme-RNA intermediate. The proton acceptor active site deprotonates the incoming PreQ1, allowing a nucleophilic attack on the C1' of the ribose to form the product. After dissociation, two additional enzymatic reactions on the tRNA convert PreQ1 to queuine (Q), resulting in the hypermodified nucleoside queuosine (7-(((4,5-cis-dihydroxy-2-cyclopenten-1-yl)amino)methyl)-7-deazaguanosine). The polypeptide is Queuine tRNA-ribosyltransferase (Aliivibrio fischeri (strain ATCC 700601 / ES114) (Vibrio fischeri)).